The primary structure comprises 354 residues: 3-dehydroquinate synthase (354 aa).

Residues glycine 100 to aspartate 104, threonine 124 to threonine 125, lysine 136, lysine 145, and phenylalanine 163 to threonine 166 each bind NAD(+). Glutamate 178, histidine 242, and histidine 256 together coordinate Zn(2+).

Belongs to the sugar phosphate cyclases superfamily. Dehydroquinate synthase family. The cofactor is NAD(+). Co(2+) is required as a cofactor. Zn(2+) serves as cofactor.

The protein resides in the cytoplasm. It carries out the reaction 7-phospho-2-dehydro-3-deoxy-D-arabino-heptonate = 3-dehydroquinate + phosphate. The protein operates within metabolic intermediate biosynthesis; chorismate biosynthesis; chorismate from D-erythrose 4-phosphate and phosphoenolpyruvate: step 2/7. Functionally, catalyzes the conversion of 3-deoxy-D-arabino-heptulosonate 7-phosphate (DAHP) to dehydroquinate (DHQ). This chain is 3-dehydroquinate synthase, found in Staphylococcus aureus (strain COL).